The primary structure comprises 179 residues: Probable WRKY transcription factor 24 (179 aa).

The WRKY DNA-binding region spans 92–157 (SDDDVLDDGY…YEGVHNHPCE (66 aa)).

The protein belongs to the WRKY group II-c family.

It is found in the nucleus. Its function is as follows. Transcription factor. Interacts specifically with the W box (5'-(T)TGAC[CT]-3'), a frequently occurring elicitor-responsive cis-acting element. In Arabidopsis thaliana (Mouse-ear cress), this protein is Probable WRKY transcription factor 24 (WRKY24).